The primary structure comprises 507 residues: AMSH-like ubiquitin thioesterase 1 (507 aa).

An MPN domain is found at 333-463 (LHIATSMMDT…IFRLTTPGGM (131 aa)). The Zn(2+) site is built by H411, H413, D424, H426, C469, H475, and H477. The JAMM motif motif lies at 411-424 (HTHPTQSCFMSSID).

This sequence belongs to the peptidase M67C family. Zn(2+) is required as a cofactor.

The protein localises to the membrane. Its subcellular location is the cytoplasm. Its function is as follows. Zinc metalloprotease that cleaves 'Lys-48'- and 'Lys-63'-linked polyubiquitin chains. The polypeptide is AMSH-like ubiquitin thioesterase 1 (AMSH1) (Arabidopsis thaliana (Mouse-ear cress)).